A 134-amino-acid polypeptide reads, in one-letter code: Lymphocyte antigen 6G (134 aa).

The first 26 residues, 1–26 (MDTCHIAKSCVLILLVVLLCAERAQG), serve as a signal peptide directing secretion. The region spanning 27-118 (LECYNCIGVP…PTGGSSWTMA (92 aa)) is the UPAR/Ly6 domain. 5 cysteine pairs are disulfide-bonded: cysteine 29–cysteine 53, cysteine 32–cysteine 41, cysteine 46–cysteine 74, cysteine 78–cysteine 98, and cysteine 99–cysteine 104. A lipid anchor (GPI-anchor amidated asparagine) is attached at asparagine 105. Positions 106 to 134 (AAVPTGGSSWTMAGVLLFSLVSVLLQTFL) are cleaved as a propeptide — removed in mature form.

As to expression, expressed in bone marrow.

It localises to the cell membrane. This chain is Lymphocyte antigen 6G (Ly6g), found in Mus musculus (Mouse).